The sequence spans 120 residues: Cell division topological specificity factor (120 aa).

The tract at residues 93–120 is disordered; that stretch reads LNSCEGENPQQDPGAAPSEGGHLSSPSP.

This sequence belongs to the MinE family.

Prevents the cell division inhibition by proteins MinC and MinD at internal division sites while permitting inhibition at polar sites. This ensures cell division at the proper site by restricting the formation of a division septum at the midpoint of the long axis of the cell. This chain is Cell division topological specificity factor, found in Synechococcus sp. (strain JA-3-3Ab) (Cyanobacteria bacterium Yellowstone A-Prime).